A 190-amino-acid chain; its full sequence is MRVILASTSPRRSQILSLLGIEFEVIPAKVEEEVIPGKPVLTARKLAKEKALSVWRENRDAVVIGADTLVFLGNEIIGKPKDEKDAVNILKKLSGKWHSVVTALCVYSPEKVFLTHDIAKVKFRELSKEEIISYVKSGEPMDKAGAYGVQGFGATIVERIHGNFYTVMGLPIVKLYKILRELNLLAGTFS.

The Proton acceptor role is filled by aspartate 67.

It belongs to the Maf family. YhdE subfamily. The cofactor is a divalent metal cation.

Its subcellular location is the cytoplasm. It catalyses the reaction dTTP + H2O = dTMP + diphosphate + H(+). It carries out the reaction UTP + H2O = UMP + diphosphate + H(+). Its function is as follows. Nucleoside triphosphate pyrophosphatase that hydrolyzes dTTP and UTP. May have a dual role in cell division arrest and in preventing the incorporation of modified nucleotides into cellular nucleic acids. The protein is dTTP/UTP pyrophosphatase of Aquifex aeolicus (strain VF5).